The following is a 173-amino-acid chain: ATP synthase subunit b 1 (173 aa).

The helical transmembrane segment at 15–37 threads the bilayer; sequence TFWVTVAVLIFLAFFGRKIVGAI.

This sequence belongs to the ATPase B chain family. In terms of assembly, F-type ATPases have 2 components, F(1) - the catalytic core - and F(0) - the membrane proton channel. F(1) has five subunits: alpha(3), beta(3), gamma(1), delta(1), epsilon(1). F(0) has three main subunits: a(1), b(2) and c(10-14). The alpha and beta chains form an alternating ring which encloses part of the gamma chain. F(1) is attached to F(0) by a central stalk formed by the gamma and epsilon chains, while a peripheral stalk is formed by the delta and b chains.

Its subcellular location is the cell inner membrane. Its function is as follows. F(1)F(0) ATP synthase produces ATP from ADP in the presence of a proton or sodium gradient. F-type ATPases consist of two structural domains, F(1) containing the extramembraneous catalytic core and F(0) containing the membrane proton channel, linked together by a central stalk and a peripheral stalk. During catalysis, ATP synthesis in the catalytic domain of F(1) is coupled via a rotary mechanism of the central stalk subunits to proton translocation. Component of the F(0) channel, it forms part of the peripheral stalk, linking F(1) to F(0). This is ATP synthase subunit b 1 from Acidiphilium cryptum (strain JF-5).